Reading from the N-terminus, the 438-residue chain is Exodeoxyribonuclease 7 large subunit (438 aa).

The tract at residues 406-438 (ATSTGPTDDIPSSAARLPASPAPDARPASGPES) is disordered.

This sequence belongs to the XseA family. As to quaternary structure, heterooligomer composed of large and small subunits.

The protein resides in the cytoplasm. The enzyme catalyses Exonucleolytic cleavage in either 5'- to 3'- or 3'- to 5'-direction to yield nucleoside 5'-phosphates.. Functionally, bidirectionally degrades single-stranded DNA into large acid-insoluble oligonucleotides, which are then degraded further into small acid-soluble oligonucleotides. In Clavibacter sepedonicus (Clavibacter michiganensis subsp. sepedonicus), this protein is Exodeoxyribonuclease 7 large subunit.